We begin with the raw amino-acid sequence, 36 residues long: Histone H1-like protein EM5 (36 aa).

Residues 1–36 enclose the H15 domain; sequence MITAAVGALKERGGSSRQAILKYIQANFKVQANPAA.

The protein belongs to the histone H1/H5 family. In terms of tissue distribution, sperm.

It is found in the nucleus. The protein localises to the chromosome. This is Histone H1-like protein EM5 from Ensis minor (Razor shell).